The primary structure comprises 289 residues: G1/S-specific cyclin-D2 (289 aa).

In terms of domain architecture, Cyclin N-terminal spans Val26 to Leu151. Residues Asp264–Leu289 are disordered. Ser271 is modified (phosphoserine). Phosphothreonine is present on Thr280.

This sequence belongs to the cyclin family. Cyclin D subfamily. Interacts with either CDK4 or CDK6 protein kinase to form a serine/threonine kinase holoenzyme complex. The cyclin subunit imparts substrate specificity to the complex. Phosphorylation at Thr-280 by MAP kinases is required for ubiquitination and degradation by the DCX(AMBRA1) complex. Post-translationally, ubiquitinated by the DCX(AMBRA1) complex during the transition from G1 to S cell phase, leading to its degradation: ubiquitination is dependent on Thr-280 phosphorylation. The DCX(AMBRA1) complex represents the major regulator of CCND2 stability during the G1/S transition. Polyubiquitinated by the SCF(FBXL2) complex, leading to proteasomal degradation.

It localises to the nucleus. The protein resides in the cytoplasm. The protein localises to the nucleus membrane. In terms of biological role, regulatory component of the cyclin D2-CDK4 (DC) complex that phosphorylates and inhibits members of the retinoblastoma (RB) protein family including RB1 and regulates the cell-cycle during G(1)/S transition. Phosphorylation of RB1 allows dissociation of the transcription factor E2F from the RB/E2F complex and the subsequent transcription of E2F target genes which are responsible for the progression through the G(1) phase. Hypophosphorylates RB1 in early G(1) phase. Cyclin D-CDK4 complexes are major integrators of various mitogenenic and antimitogenic signals. The sequence is that of G1/S-specific cyclin-D2 from Homo sapiens (Human).